The following is a 274-amino-acid chain: Protein A11 homolog (274 aa).

The stretch at 106 to 136 (DDNKRVHLLEQEIAELRKKKTKSKNLLDFTN) forms a coiled coil.

This sequence belongs to the poxviridae A11 family. As to quaternary structure, homomultimer. Interacts with A32. Phosphorylated by a F10-independent mechanism.

It localises to the host cytoplasm. In terms of biological role, required for viral crescent formation early during virus morphogenesis. This chain is Protein A11 homolog, found in Fowlpox virus (strain NVSL) (FPV).